A 101-amino-acid chain; its full sequence is uncharacterized protein (101 aa).

The segment covering 1 to 11 (MSDEGYRELVE) has biased composition (basic and acidic residues). The tract at residues 1 to 26 (MSDEGYRELVESKSAPTTPGPWSPDR) is disordered.

This is an uncharacterized protein from Torque teno canis virus (isolate Cf-TTV10).